A 93-amino-acid polypeptide reads, in one-letter code: Protein translocase subunit SecE (93 aa).

The tract at residues 1–33 (MTDALGSIDMPDAEDETREKKARKGGKRGKKGP) is disordered. Basic residues predominate over residues 20 to 33 (KKARKGGKRGKKGP). Residues 64–84 (TVVIVFVVIMIGLVTVIDFGF) form a helical membrane-spanning segment.

The protein belongs to the SecE/SEC61-gamma family. Component of the Sec protein translocase complex. Heterotrimer consisting of SecY, SecE and SecG subunits. The heterotrimers can form oligomers, although 1 heterotrimer is thought to be able to translocate proteins. Interacts with the ribosome. Interacts with SecDF, and other proteins may be involved. Interacts with SecA.

It is found in the cell membrane. Its function is as follows. Essential subunit of the Sec protein translocation channel SecYEG. Clamps together the 2 halves of SecY. May contact the channel plug during translocation. In Streptomyces virginiae (Streptomyces cinnamonensis), this protein is Protein translocase subunit SecE.